Reading from the N-terminus, the 156-residue chain is ATP synthase subunit b (156 aa).

A helical transmembrane segment spans residues 11–31 (AIAFFIFVVFCMKYVWPPLMA).

This sequence belongs to the ATPase B chain family. F-type ATPases have 2 components, F(1) - the catalytic core - and F(0) - the membrane proton channel. F(1) has five subunits: alpha(3), beta(3), gamma(1), delta(1), epsilon(1). F(0) has three main subunits: a(1), b(2) and c(10-14). The alpha and beta chains form an alternating ring which encloses part of the gamma chain. F(1) is attached to F(0) by a central stalk formed by the gamma and epsilon chains, while a peripheral stalk is formed by the delta and b chains.

It is found in the cell inner membrane. In terms of biological role, f(1)F(0) ATP synthase produces ATP from ADP in the presence of a proton or sodium gradient. F-type ATPases consist of two structural domains, F(1) containing the extramembraneous catalytic core and F(0) containing the membrane proton channel, linked together by a central stalk and a peripheral stalk. During catalysis, ATP synthesis in the catalytic domain of F(1) is coupled via a rotary mechanism of the central stalk subunits to proton translocation. Functionally, component of the F(0) channel, it forms part of the peripheral stalk, linking F(1) to F(0). This chain is ATP synthase subunit b, found in Aeromonas hydrophila subsp. hydrophila (strain ATCC 7966 / DSM 30187 / BCRC 13018 / CCUG 14551 / JCM 1027 / KCTC 2358 / NCIMB 9240 / NCTC 8049).